Here is a 272-residue protein sequence, read N- to C-terminus: Putative hydro-lyase Rpal_1947 (272 aa).

This sequence belongs to the D-glutamate cyclase family.

This chain is Putative hydro-lyase Rpal_1947, found in Rhodopseudomonas palustris (strain TIE-1).